We begin with the raw amino-acid sequence, 700 residues long: DNA ligase (700 aa).

Residues Asp42–Asp46, Ser91–Leu92, and Glu126 each bind NAD(+). The N6-AMP-lysine intermediate role is filled by Lys128. NAD(+)-binding residues include Arg149, Glu184, Lys300, and Lys324. Zn(2+)-binding residues include Cys418, Cys421, Cys436, and Cys441. The BRCT domain maps to Thr598–Asp686.

Belongs to the NAD-dependent DNA ligase family. LigA subfamily. It depends on Mn(2+) as a cofactor.

The catalysed reaction is NAD(+) + (deoxyribonucleotide)n-3'-hydroxyl + 5'-phospho-(deoxyribonucleotide)m = (deoxyribonucleotide)n+m + AMP + beta-nicotinamide D-nucleotide.. Its function is as follows. DNA ligase that catalyzes the formation of phosphodiester linkages between 5'-phosphoryl and 3'-hydroxyl groups in double-stranded DNA using NAD as a coenzyme and as the energy source for the reaction. It is essential for DNA replication and repair of damaged DNA. This Deinococcus radiodurans (strain ATCC 13939 / DSM 20539 / JCM 16871 / CCUG 27074 / LMG 4051 / NBRC 15346 / NCIMB 9279 / VKM B-1422 / R1) protein is DNA ligase.